The chain runs to 334 residues: Glyceraldehyde-3-phosphate dehydrogenase (334 aa).

NAD(+) is bound by residues 11–12 (RI), Asp33, and Ser119. Residues 149–151 (SCT) and Thr180 contribute to the D-glyceraldehyde 3-phosphate site. Residue Cys150 is the Nucleophile of the active site. Asn181 contributes to the NAD(+) binding site. D-glyceraldehyde 3-phosphate contacts are provided by residues Arg197, 210-211 (TG), and Arg233. Asn314 lines the NAD(+) pocket.

The protein belongs to the glyceraldehyde-3-phosphate dehydrogenase family. In terms of assembly, homotetramer.

It is found in the cytoplasm. It catalyses the reaction D-glyceraldehyde 3-phosphate + phosphate + NAD(+) = (2R)-3-phospho-glyceroyl phosphate + NADH + H(+). It functions in the pathway carbohydrate degradation; glycolysis; pyruvate from D-glyceraldehyde 3-phosphate: step 1/5. In terms of biological role, catalyzes the oxidative phosphorylation of glyceraldehyde 3-phosphate (G3P) to 1,3-bisphosphoglycerate (BPG) using the cofactor NAD. The first reaction step involves the formation of a hemiacetal intermediate between G3P and a cysteine residue, and this hemiacetal intermediate is then oxidized to a thioester, with concomitant reduction of NAD to NADH. The reduced NADH is then exchanged with the second NAD, and the thioester is attacked by a nucleophilic inorganic phosphate to produce BPG. This is Glyceraldehyde-3-phosphate dehydrogenase (gap) from Clostridium pasteurianum.